The sequence spans 199 residues: Transcriptional regulatory protein EntR (199 aa).

Residues 3–124 (KILVIDRCHF…TLSHTIQEAL (122 aa)) form the Response regulatory domain. Asp8 is modified (4-aspartylphosphate). The HTH luxR-type domain occupies 133–198 (PKNATPLLTP…SPFLSLPGKG (66 aa)). The H-T-H motif DNA-binding region spans 157-176 (NNAIAAALSIHGKTVYTYKR).

In terms of biological role, may serve to repress the entericidin locus in C.freundii. The chain is Transcriptional regulatory protein EntR (ecnR) from Citrobacter freundii.